Consider the following 561-residue polypeptide: Dihydroxy-acid dehydratase 3 (561 aa).

C50 lines the [2Fe-2S] cluster pocket. D82 is a Mg(2+) binding site. C123 provides a ligand contact to [2Fe-2S] cluster. D124 and K125 together coordinate Mg(2+). Position 125 is an N6-carboxylysine (K125). C195 is a binding site for [2Fe-2S] cluster. Residue E447 coordinates Mg(2+). S473 functions as the Proton acceptor in the catalytic mechanism.

The protein belongs to the IlvD/Edd family. In terms of assembly, homodimer. The cofactor is [2Fe-2S] cluster. It depends on Mg(2+) as a cofactor.

The enzyme catalyses (2R)-2,3-dihydroxy-3-methylbutanoate = 3-methyl-2-oxobutanoate + H2O. The catalysed reaction is (2R,3R)-2,3-dihydroxy-3-methylpentanoate = (S)-3-methyl-2-oxopentanoate + H2O. Its pathway is amino-acid biosynthesis; L-isoleucine biosynthesis; L-isoleucine from 2-oxobutanoate: step 3/4. It functions in the pathway amino-acid biosynthesis; L-valine biosynthesis; L-valine from pyruvate: step 3/4. Functionally, functions in the biosynthesis of branched-chain amino acids. Catalyzes the dehydration of (2R,3R)-2,3-dihydroxy-3-methylpentanoate (2,3-dihydroxy-3-methylvalerate) into 2-oxo-3-methylpentanoate (2-oxo-3-methylvalerate) and of (2R)-2,3-dihydroxy-3-methylbutanoate (2,3-dihydroxyisovalerate) into 2-oxo-3-methylbutanoate (2-oxoisovalerate), the penultimate precursor to L-isoleucine and L-valine, respectively. The polypeptide is Dihydroxy-acid dehydratase 3 (Bordetella bronchiseptica (strain ATCC BAA-588 / NCTC 13252 / RB50) (Alcaligenes bronchisepticus)).